A 472-amino-acid polypeptide reads, in one-letter code: WAS protein family homolog DDB_G0292878 (472 aa).

The segment at 279-472 (LPTYDNSNSG…ESDTDSSEWE (194 aa)) is disordered. Positions 282–299 (YDNSNSGSAPVNQSSGGD) are enriched in polar residues. Low complexity predominate over residues 300-314 (NNVNNNNNNNNSNNS). A compositionally biased stretch (pro residues) spans 320–356 (PPQPTNAPPPPPPPPQSANAPPPPPPPPVSAPPPFNP). Acidic residues predominate over residues 363–373 (NDDDDDDDDDN). Residues 374 to 383 (GGGGGPGGAI) are compositionally biased toward gly residues. In terms of domain architecture, WH2 spans 382-401 (AIGDLLADIRRGHKNRLKKA). Residues 457-472 (TDDQDGESDTDSSEWE) are compositionally biased toward acidic residues.

This sequence belongs to the WASH1 family.

Its function is as follows. Acts as a nucleation-promoting factor by activating the Arp2/3 complex to induce actin polymerization. This Dictyostelium discoideum (Social amoeba) protein is WAS protein family homolog DDB_G0292878.